The sequence spans 100 residues: Small ribosomal subunit protein uS14c (100 aa).

This sequence belongs to the universal ribosomal protein uS14 family. In terms of assembly, part of the 30S ribosomal subunit.

It is found in the plastid. The protein resides in the chloroplast. Functionally, binds 16S rRNA, required for the assembly of 30S particles. This chain is Small ribosomal subunit protein uS14c, found in Morus indica (Mulberry).